We begin with the raw amino-acid sequence, 449 residues long: Gamma conglutin 1 (449 aa).

Residues 1-33 form the signal peptide; that stretch reads MARNMAHILHILVISLSYSFLFVSSSSQDSQSL. The region spanning 60-429 is the Peptidase A1 domain; sequence HWANIHKRTP…DLERSRVGFN (370 aa). 5 disulfide bridges follow: Cys-88–Cys-178, Cys-102–Cys-115, Cys-107–Cys-133, Cys-118–Cys-128, and Cys-350–Cys-391. Asn-130 is a glycosylation site (N-linked (GlcNAc...) asparagine).

It belongs to the peptidase A1 family. Two-subunit monomeric unit made of alpha and beta subunits coupled by disulfide bonds (at pH 4.5 and under non-reducing conditions). Can also form oligomers including dimer, tetramer and cyclic hexamer (trimer of dimers) (at pH &gt; 5.5). Component of globulins complexes which accumulate in seeds. Interacts with flavonoids (e.g. apigenin glucosides) present in globulins complexes. Forms a static complex with vitexin. Post-translationally, undergoes very complex post-translational maturation; the proteolytic processing leading to the formation of two alpha and beta subunits is incomplete, leaving a certain amount of the protein in an uncut form. Glycosylated on alpha chain. In terms of tissue distribution, expressed in developing cotyledons and in the embryonic axis of germinating seeds. Accumulates in seeds, especially in the protein bodies of developing cotyledonary cells (at protein level). Also detected, at low levels, in plumules and radicles.

The protein localises to the secreted. It localises to the extracellular space. Its function is as follows. Sulfur-rich seed storage protein that remains undegraded at germination. The polypeptide is Gamma conglutin 1 (Lupinus angustifolius (Narrow-leaved blue lupine)).